Reading from the N-terminus, the 328-residue chain is Malate dehydrogenase (328 aa).

An NAD(+)-binding site is contributed by 11–17 (GAAGQIG). Arg94 and Arg100 together coordinate substrate. NAD(+) contacts are provided by residues Asn107, Gln114, and 131–133 (VGN). Substrate contacts are provided by Asn133 and Arg164. Catalysis depends on His189, which acts as the Proton acceptor.

Belongs to the LDH/MDH superfamily. MDH type 2 family.

It catalyses the reaction (S)-malate + NAD(+) = oxaloacetate + NADH + H(+). Its function is as follows. Catalyzes the reversible oxidation of malate to oxaloacetate. This Acinetobacter baumannii (strain AB0057) protein is Malate dehydrogenase.